Reading from the N-terminus, the 841-residue chain is Homeobox-leucine zipper protein ATHB-9 (841 aa).

The span at 1–18 shows a compositional bias: basic and acidic residues; it reads MMAHHSMDDRDSPDKGFD. The disordered stretch occupies residues 1–21; sequence MMAHHSMDDRDSPDKGFDSGK. The segment at residues 18–81 is a DNA-binding region (homeobox); it reads DSGKYVRYTP…NRRCREKQRK (64 aa). Residues 85–118 adopt a coiled-coil conformation; sequence RLQTVNRKLSAMNKLLMEENDRLQKQVSNLVYEN. Disordered regions lie at residues 140 to 162 and 602 to 630; these read VVVSGQQRQQQNPTHQHPQRDVN and DQKTNPNDHQSASRTRDLASSLDGSTKTD. Residues 145 to 155 are compositionally biased toward low complexity; sequence QQRQQQNPTHQ. The START domain occupies 160–388; that stretch reads DVNNPANLLS…IAQETSGEVQ (229 aa). The span at 603–614 shows a compositional bias: polar residues; the sequence is QKTNPNDHQSAS.

This sequence belongs to the HD-ZIP homeobox family. Class III subfamily. Binds DNA as homodimer. Interacts with ESR1 and ESR2. Interacts with ZPR3.

It is found in the nucleus. Its function is as follows. Probable transcription factor involved in the determination of adaxial-abaxial polarity in ovule primordium. Specifies adaxial leaf fates. Binds to the DNA sequence 5'-GTAAT[GC]ATTAC-3'. The sequence is that of Homeobox-leucine zipper protein ATHB-9 (ATHB-9) from Arabidopsis thaliana (Mouse-ear cress).